The primary structure comprises 263 residues: 4-hydroxy-tetrahydrodipicolinate reductase (263 aa).

Residues 7–12, 96–98, and 122–125 each bind NAD(+); these read GFKGRM, GTT, and APNF. His152 (proton donor/acceptor) is an active-site residue. His153 serves as a coordination point for (S)-2,3,4,5-tetrahydrodipicolinate. Catalysis depends on Lys156, which acts as the Proton donor. 162–163 lines the (S)-2,3,4,5-tetrahydrodipicolinate pocket; that stretch reads GT.

This sequence belongs to the DapB family.

The protein localises to the cytoplasm. The enzyme catalyses (S)-2,3,4,5-tetrahydrodipicolinate + NAD(+) + H2O = (2S,4S)-4-hydroxy-2,3,4,5-tetrahydrodipicolinate + NADH + H(+). It carries out the reaction (S)-2,3,4,5-tetrahydrodipicolinate + NADP(+) + H2O = (2S,4S)-4-hydroxy-2,3,4,5-tetrahydrodipicolinate + NADPH + H(+). Its pathway is amino-acid biosynthesis; L-lysine biosynthesis via DAP pathway; (S)-tetrahydrodipicolinate from L-aspartate: step 4/4. Catalyzes the conversion of 4-hydroxy-tetrahydrodipicolinate (HTPA) to tetrahydrodipicolinate. The chain is 4-hydroxy-tetrahydrodipicolinate reductase from Listeria innocua serovar 6a (strain ATCC BAA-680 / CLIP 11262).